Consider the following 266-residue polypeptide: 3-methyl-2-oxobutanoate hydroxymethyltransferase (266 aa).

Mg(2+)-binding residues include D47 and D86. Residues 47–48, D86, and K114 each bind 3-methyl-2-oxobutanoate; that span reads DS. E116 contacts Mg(2+). E183 functions as the Proton acceptor in the catalytic mechanism.

Belongs to the PanB family. As to quaternary structure, homodecamer; pentamer of dimers. The cofactor is Mg(2+).

The protein resides in the cytoplasm. It carries out the reaction 3-methyl-2-oxobutanoate + (6R)-5,10-methylene-5,6,7,8-tetrahydrofolate + H2O = 2-dehydropantoate + (6S)-5,6,7,8-tetrahydrofolate. Its pathway is cofactor biosynthesis; (R)-pantothenate biosynthesis; (R)-pantoate from 3-methyl-2-oxobutanoate: step 1/2. In terms of biological role, catalyzes the reversible reaction in which hydroxymethyl group from 5,10-methylenetetrahydrofolate is transferred onto alpha-ketoisovalerate to form ketopantoate. In Idiomarina loihiensis (strain ATCC BAA-735 / DSM 15497 / L2-TR), this protein is 3-methyl-2-oxobutanoate hydroxymethyltransferase.